Consider the following 79-residue polypeptide: Anti-insect Ac4 (79 aa).

The first 17 residues, 1–17, serve as a signal peptide directing secretion; the sequence is MISLSLLLMIGVESVRD. The region spanning 18-77 is the LCN-type CS-alpha/beta domain; that stretch reads GYIVDFKNCVYRCVPPCDGLCKKNGGKGGSCSFLIGSGLACWCNALPDNVPIKDPLHKCP. 4 disulfide bridges follow: C26/C76, C30/C48, C34/C58, and C38/C60.

It belongs to the long (4 C-C) scorpion toxin superfamily. Sodium channel inhibitor family. Alpha subfamily. As to expression, expressed by the venom gland.

It localises to the secreted. Functionally, alpha toxins bind voltage-independently at site-3 of sodium channels (Nav) and inhibit the inactivation of the activated channels, thereby blocking neuronal transmission. This protein is weakly toxic against insects (ED(50)&gt;2 ug per 100 mg of blowfly larvae), but is inactive against mammalian sodium channels (rNav1.2a, and rNav1.4). The polypeptide is Anti-insect Ac4 (Androctonus crassicauda (Arabian fat-tailed scorpion)).